An 801-amino-acid polypeptide reads, in one-letter code: Mediator of RNA polymerase II transcription subunit 25 (801 aa).

3 stretches are compositionally biased toward low complexity: residues 647–676, 687–710, and 722–735; these read PQQLASQAPPQATQSSVQAPGQPQNPQPGA, PQLRNLLLSQQPPQSSVPQTQQPL, and PHQAMGQQMQHQAP. The disordered stretch occupies residues 647 to 735; sequence PQQLASQAPP…MGQQMQHQAP (89 aa). The LXXLL motif signature appears at 689–693; sequence LRNLL.

This sequence belongs to the Mediator complex subunit 25 family. In terms of assembly, component of the Mediator complex.

The protein resides in the nucleus. Functionally, component of the Mediator complex, a coactivator involved in the regulated transcription of nearly all RNA polymerase II-dependent genes. Mediator functions as a bridge to convey information from gene-specific regulatory proteins to the basal RNA polymerase II transcription machinery. Mediator is recruited to promoters by direct interactions with regulatory proteins and serves as a scaffold for the assembly of a functional preinitiation complex with RNA polymerase II and the general transcription factors. In Xenopus laevis (African clawed frog), this protein is Mediator of RNA polymerase II transcription subunit 25 (med25).